We begin with the raw amino-acid sequence, 996 residues long: UPF0182 protein CE0802 (996 aa).

7 consecutive transmembrane segments (helical) span residues 19–39 (VTWI…TVGF), 63–83 (IILF…AGYF), 115–135 (ILII…QRSW), 176–196 (STLL…LGGI), 212–234 (GARA…TYWL), 262–282 (KIIL…AIFL), and 290–310 (LAVV…PLML). The segment at 920–950 (VPDVNATEDADATTDGEDETPAAPAAPAGSE) is disordered. A compositionally biased stretch (acidic residues) spans 925 to 939 (ATEDADATTDGEDET). Residues 940–950 (PAAPAAPAGSE) are compositionally biased toward low complexity.

Belongs to the UPF0182 family.

Its subcellular location is the cell membrane. This is UPF0182 protein CE0802 from Corynebacterium efficiens (strain DSM 44549 / YS-314 / AJ 12310 / JCM 11189 / NBRC 100395).